Reading from the N-terminus, the 215-residue chain is Large ribosomal subunit protein bL25 (215 aa).

Residues Val190–Glu215 form a disordered region. The segment covering Asp193–Pro205 has biased composition (acidic residues). Residues Glu206 to Glu215 are compositionally biased toward basic and acidic residues.

Belongs to the bacterial ribosomal protein bL25 family. CTC subfamily. Part of the 50S ribosomal subunit; part of the 5S rRNA/L5/L18/L25 subcomplex. Contacts the 5S rRNA. Binds to the 5S rRNA independently of L5 and L18.

This is one of the proteins that binds to the 5S RNA in the ribosome where it forms part of the central protuberance. This Maricaulis maris (strain MCS10) (Caulobacter maris) protein is Large ribosomal subunit protein bL25.